The following is a 395-amino-acid chain: MTWKYDVVVVGSGIAGPIVARNVAKAGFSVLLIDKKWAIGTPKQCAEAISIKVFDKYDIPYDKRFINREIYGAKLYSPSGYELEMRYKEVSGVILERKVFDKMLAYYAAKAGADVLARTEALDVIRKDGKIVGIKAKHEDEPVEIYADIIVAADGVESTIARKAGINTYAPPHEFDSGYEYEMLIEGFDPDLIHLWFGNEVAPRGYVWVFPKDEDRANVGIGINSDNPKTAKYYLDKWLEENNIPAKKLLEINVGLIPVGGFVKELAKDNVVVVGDAARQVNPMHGGGMAEAMEAGTIASKWIVKALEEENLSLLQNYTKEWWETDGKRLEKVLKVRRVTEKLTDEDLDLFIQILSGADAEKIASGDYAEVIKALLKHPKVLMSKRRLSLLKELL.

FAD is bound by residues Ala15, Asp34, Cys45, Ala46, Ala48, Arg97, Ala121, Asp276, and Gly288. A 2,3-bis-O-(geranylgeranyl)-sn-glycerol 1-phospholipid is bound at residue Arg329.

The protein belongs to the geranylgeranyl reductase family. DGGGPL reductase subfamily. The cofactor is FAD.

It carries out the reaction a 2,3-bis-O-phytanyl-sn-glycerol 1-phospholipid + 8 A = a 2,3-bis-O-(geranylgeranyl)-sn-glycerol 1-phospholipid + 8 AH2. It catalyses the reaction 2,3-bis-O-(phytanyl)-sn-glycerol 1-phosphate + 8 A = 2,3-bis-O-(geranylgeranyl)-sn-glycerol 1-phosphate + 8 AH2. The catalysed reaction is CDP-2,3-bis-O-(geranylgeranyl)-sn-glycerol + 8 AH2 = CDP-2,3-bis-O-(phytanyl)-sn-glycerol + 8 A. The enzyme catalyses archaetidylserine + 8 AH2 = 2,3-bis-O-phytanyl-sn-glycero-3-phospho-L-serine + 8 A. It participates in membrane lipid metabolism; glycerophospholipid metabolism. In terms of biological role, is involved in the reduction of 2,3-digeranylgeranylglycerophospholipids (unsaturated archaeols) into 2,3-diphytanylglycerophospholipids (saturated archaeols) in the biosynthesis of archaeal membrane lipids. Catalyzes the formation of archaetidic acid (2,3-di-O-phytanyl-sn-glyceryl phosphate) from 2,3-di-O-geranylgeranylglyceryl phosphate (DGGGP) via the hydrogenation of each double bond of the isoprenoid chains. Is also probably able to reduce double bonds of geranyl groups in CDP-2,3-bis-O-(geranylgeranyl)-sn-glycerol and archaetidylserine, thus acting at various stages in the biosynthesis of archaeal membrane lipids. The polypeptide is Digeranylgeranylglycerophospholipid reductase (Thermococcus kodakarensis (strain ATCC BAA-918 / JCM 12380 / KOD1) (Pyrococcus kodakaraensis (strain KOD1))).